The primary structure comprises 179 residues: Large ribosomal subunit protein uL5 (179 aa).

This sequence belongs to the universal ribosomal protein uL5 family. Part of the 50S ribosomal subunit; part of the 5S rRNA/L5/L18/L25 subcomplex. Contacts the 5S rRNA and the P site tRNA. Forms a bridge to the 30S subunit in the 70S ribosome.

Functionally, this is one of the proteins that bind and probably mediate the attachment of the 5S RNA into the large ribosomal subunit, where it forms part of the central protuberance. In the 70S ribosome it contacts protein S13 of the 30S subunit (bridge B1b), connecting the 2 subunits; this bridge is implicated in subunit movement. Contacts the P site tRNA; the 5S rRNA and some of its associated proteins might help stabilize positioning of ribosome-bound tRNAs. The polypeptide is Large ribosomal subunit protein uL5 (Clostridium novyi (strain NT)).